The primary structure comprises 345 residues: Anthranilate phosphoribosyltransferase (345 aa).

5-phospho-alpha-D-ribose 1-diphosphate is bound by residues 77-79 (TAG), 82-83 (GD), Thr-87, 89-92 (NVST), 106-114 (KHGNRAVSG), and Ser-118. Gly-79 serves as a coordination point for anthranilate. Ser-91 serves as a coordination point for Mg(2+). Anthranilate is bound at residue Asn-109. Arg-164 is a binding site for anthranilate. Asp-223 and Glu-224 together coordinate Mg(2+).

The protein belongs to the anthranilate phosphoribosyltransferase family. As to quaternary structure, homodimer. Requires Mg(2+) as cofactor.

The enzyme catalyses N-(5-phospho-beta-D-ribosyl)anthranilate + diphosphate = 5-phospho-alpha-D-ribose 1-diphosphate + anthranilate. It functions in the pathway amino-acid biosynthesis; L-tryptophan biosynthesis; L-tryptophan from chorismate: step 2/5. In terms of biological role, catalyzes the transfer of the phosphoribosyl group of 5-phosphorylribose-1-pyrophosphate (PRPP) to anthranilate to yield N-(5'-phosphoribosyl)-anthranilate (PRA). This is Anthranilate phosphoribosyltransferase from Saccharolobus solfataricus (strain ATCC 35092 / DSM 1617 / JCM 11322 / P2) (Sulfolobus solfataricus).